We begin with the raw amino-acid sequence, 177 residues long: UPF0177 protein YxdF (177 aa).

4 helical membrane-spanning segments follow: residues 2–22, 30–50, 117–137, and 152–172; these read TLVL…KNTL, IFWL…VTVL, ALVH…SFII, and IVHS…DTFF.

Belongs to the UPF0177 family.

It is found in the cell membrane. This is UPF0177 protein YxdF (yxdF) from Lactococcus lactis subsp. lactis (strain IL1403) (Streptococcus lactis).